The following is a 342-amino-acid chain: Tetraacyldisaccharide 4'-kinase (342 aa).

68 to 75 (TVGGTGKT) is an ATP binding site.

The protein belongs to the LpxK family.

It carries out the reaction a lipid A disaccharide + ATP = a lipid IVA + ADP + H(+). Its pathway is glycolipid biosynthesis; lipid IV(A) biosynthesis; lipid IV(A) from (3R)-3-hydroxytetradecanoyl-[acyl-carrier-protein] and UDP-N-acetyl-alpha-D-glucosamine: step 6/6. Its function is as follows. Transfers the gamma-phosphate of ATP to the 4'-position of a tetraacyldisaccharide 1-phosphate intermediate (termed DS-1-P) to form tetraacyldisaccharide 1,4'-bis-phosphate (lipid IVA). The sequence is that of Tetraacyldisaccharide 4'-kinase from Burkholderia lata (strain ATCC 17760 / DSM 23089 / LMG 22485 / NCIMB 9086 / R18194 / 383).